Reading from the N-terminus, the 516-residue chain is Lysophosphatidylcholine acyltransferase 2B (516 aa).

Residue N28 is glycosylated (N-linked (GlcNAc...) asparagine). 3 helical membrane-spanning segments follow: residues 44 to 64 (THLS…LVPV), 68 to 88 (CIVF…INLP), and 102 to 122 (LIKS…GFLV). Positions 142–147 (HSTFFD) match the HXXXXD motif motif. 2 consecutive EF-hand domains span residues 387 to 422 (PISE…LCNP) and 424 to 459 (NTEK…AFGV). 10 residues coordinate Ca(2+): D400, N402, D404, T406, E411, D437, D439, D441, Y443, and E448.

The protein belongs to the 1-acyl-sn-glycerol-3-phosphate acyltransferase family.

The protein localises to the membrane. It functions in the pathway lipid metabolism; phospholipid metabolism. Probable acetyltransferase. This chain is Lysophosphatidylcholine acyltransferase 2B (Lpcat2b), found in Mus musculus (Mouse).